Consider the following 231-residue polypeptide: Cuticlin 2 (231 aa).

The first 16 residues, M1–A16, serve as a signal peptide directing secretion. A run of 12 repeats spans residues A75–I78, A79–A82, A90–V93, A105–I108, A114–A117, A121–V124, A137–A140, A153–A156, A169–A172, A192–A195, A208–A211, and A218–A221. A 12 X 4 AA repeats of A-A-P-[AVI] region spans residues A75 to A221.

In terms of processing, tyrosine residues can be cross-linked in vitro, leading to the formation of insoluble high molecular-weight complexes.

The protein localises to the secreted. Its function is as follows. Component of the insoluble part of the cuticles. The chain is Cuticlin 2 from Caenorhabditis elegans.